Reading from the N-terminus, the 666-residue chain is Endogenous retrovirus group K member 19 Gag polyprotein (666 aa).

Glycine 2 carries the N-myristoyl glycine lipid modification. Disordered stretches follow at residues 170–189 and 223–264; these read LVGPSESKPRGTSRLPAGQV and PLES…GSEL. The span at 232–247 shows a compositional bias: pro residues; sequence GMPPAPQGRAPYPQPP. 2 CCHC-type zinc fingers span residues 544-561 and 580-597; these read GKCYNCGQIGHLKKNCPV and DLCPRCKKGKHWASQCRS. The tract at residues 598 to 640 is disordered; that stretch reads KFDKNGQPLSGNEQRGQPQAPQQTGAFPIQPFVPHGFQGQQPP. Polar residues predominate over residues 604-622; it reads QPLSGNEQRGQPQAPQQTG.

The protein belongs to the beta type-B retroviral Gag protein family. HERV class-II K(HML-2) gag subfamily. Post-translationally, myristoylation is essential for retroviral assembly. Alteration of the glycine residue leads to a block in the budding of particles and an accumulation of Gag inside the cell. Specific enzymatic cleavages may yield mature proteins.

It is found in the cell membrane. In terms of biological role, the products of the Gag polyproteins of infectious retroviruses perform highly complex orchestrated tasks during the assembly, budding, maturation, and infection stages of the viral replication cycle. During viral assembly, the proteins form membrane associations and self-associations that ultimately result in budding of an immature virion from the infected cell. Gag precursors also function during viral assembly to selectively bind and package two plus strands of genomic RNA. Endogenous Gag proteins may have kept, lost or modified their original function during evolution. The sequence is that of Endogenous retrovirus group K member 19 Gag polyprotein (ERVK-19) from Homo sapiens (Human).